The sequence spans 177 residues: ATP synthase subunit delta (177 aa).

This sequence belongs to the ATPase delta chain family. As to quaternary structure, F-type ATPases have 2 components, F(1) - the catalytic core - and F(0) - the membrane proton channel. F(1) has five subunits: alpha(3), beta(3), gamma(1), delta(1), epsilon(1). F(0) has three main subunits: a(1), b(2) and c(10-14). The alpha and beta chains form an alternating ring which encloses part of the gamma chain. F(1) is attached to F(0) by a central stalk formed by the gamma and epsilon chains, while a peripheral stalk is formed by the delta and b chains.

The protein resides in the cell inner membrane. F(1)F(0) ATP synthase produces ATP from ADP in the presence of a proton or sodium gradient. F-type ATPases consist of two structural domains, F(1) containing the extramembraneous catalytic core and F(0) containing the membrane proton channel, linked together by a central stalk and a peripheral stalk. During catalysis, ATP synthesis in the catalytic domain of F(1) is coupled via a rotary mechanism of the central stalk subunits to proton translocation. In terms of biological role, this protein is part of the stalk that links CF(0) to CF(1). It either transmits conformational changes from CF(0) to CF(1) or is implicated in proton conduction. The polypeptide is ATP synthase subunit delta (Herminiimonas arsenicoxydans).